We begin with the raw amino-acid sequence, 568 residues long: MTRDIDRENYAELYGPTTGDKVRLGDTELFAKVEEDLRTHGDEAVFGGGKTLRDGLGMAPGVTQAEGALDWVLTNATIIDPILGIVAADIGIRNGEIAGIGKAGNPDTMDGVDMVVGPSTDVYPAEGKIATAGGLDIHIHFNSAQLHEHALSGGITTMLGGGYGGGATTCTTGPENVKRFLQAAEAWPVNVGFYGKGNASDPGPLREQVEAGVCGLKLHEDWGSTPETINTCLEVAEDEDVQVCMHTDTLNEAGFLENTFGAVDGRTMHLFHIEGAGGGHAPDIMEMVGEPNMLPSSTNPSMPYTDNTFDEHLDMVMVCHHLNPDVPEDVAFAESRVRAETIAAEDVLHDMGAISMMTSDSQAMGRIAEVIPRTWQTASKMKSQRGPLPEDEGTGADNHRIKRYIAKYTVNPAISAGIEEHVGTLEPGKLADICLWDPAFFGVKPAMTFKGGFPVHSEMGEANGSLMTCEPILQRERAGAVGKAKHAISLSFVSPAAAEAGIDEEYGLDSRVVPIEGARTPGKDDMVYNSYCPDDIEVDPETFEVRVDGEHVTCEPSSELPLAQRYLL.

The region spanning 133–568 (GGLDIHIHFN…ELPLAQRYLL (436 aa)) is the Urease domain. The Ni(2+) site is built by His-138, His-140, and Lys-217. At Lys-217 the chain carries N6-carboxylysine. His-219 provides a ligand contact to substrate. The Ni(2+) site is built by His-246 and His-272. The active-site Proton donor is His-320. Asp-360 is a binding site for Ni(2+).

The protein belongs to the metallo-dependent hydrolases superfamily. Urease alpha subunit family. As to quaternary structure, heterotrimer of UreA (gamma), UreB (beta) and UreC (alpha) subunits. Three heterotrimers associate to form the active enzyme. Ni cation serves as cofactor. Post-translationally, carboxylation allows a single lysine to coordinate two nickel ions.

It localises to the cytoplasm. The enzyme catalyses urea + 2 H2O + H(+) = hydrogencarbonate + 2 NH4(+). The protein operates within nitrogen metabolism; urea degradation; CO(2) and NH(3) from urea (urease route): step 1/1. This Haloarcula marismortui (strain ATCC 43049 / DSM 3752 / JCM 8966 / VKM B-1809) (Halobacterium marismortui) protein is Urease subunit alpha.